The following is a 224-amino-acid chain: Synaptogyrin-2 (224 aa).

An N-acetylmethionine modification is found at M1. At S3 the chain carries Phosphoserine. Residues 20–171 (FLTQPQVVAR…LASLAYQRYK (152 aa)) form the MARVEL domain. A run of 4 helical transmembrane segments spans residues 26 to 46 (VVAR…IYGE), 73 to 93 (AIGV…AYFP), 105 to 125 (VIGD…GFCF), and 147 to 167 (AAIT…SLAY).

This sequence belongs to the synaptogyrin family. As to quaternary structure, (Microbial infection) Interacts with SFTS phlebovirus protein NSs; may be involved in virus replication. In terms of processing, may be tyrosine phosphorylated by Src. Ubiquitous; low expression in brain.

It localises to the cytoplasmic vesicle membrane. The protein resides in the cytoplasmic vesicle. The protein localises to the secretory vesicle. Its subcellular location is the synaptic vesicle membrane. It is found in the lipid droplet. Functionally, may play a role in regulated exocytosis. In neuronal cells, modulates the localization of synaptophysin/SYP into synaptic-like microvesicles and may therefore play a role in the formation and/or the maturation of this vesicles. May also play a role in GLUT4 storage and transport to the plasma membrane. In terms of biological role, (Microbial infection) May play a role in the assembly of cytoplasmic inclusion bodies required for SFTS phlebovirus replication. In Homo sapiens (Human), this protein is Synaptogyrin-2.